The sequence spans 232 residues: Lipoprotein-releasing system ATP-binding protein LolD (232 aa).

The 221-residue stretch at 11 to 231 (VYLHDIKREY…SLENGHVVEL (221 aa)) folds into the ABC transporter domain. Position 47–54 (47–54 (APSGSGKS)) interacts with ATP.

Belongs to the ABC transporter superfamily. Lipoprotein translocase (TC 3.A.1.125) family. In terms of assembly, the complex is composed of two ATP-binding proteins (LolD) and two transmembrane proteins (LolC and LolE).

It localises to the cell inner membrane. Functionally, part of the ABC transporter complex LolCDE involved in the translocation of mature outer membrane-directed lipoproteins, from the inner membrane to the periplasmic chaperone, LolA. Responsible for the formation of the LolA-lipoprotein complex in an ATP-dependent manner. The protein is Lipoprotein-releasing system ATP-binding protein LolD of Nitrobacter winogradskyi (strain ATCC 25391 / DSM 10237 / CIP 104748 / NCIMB 11846 / Nb-255).